Consider the following 123-residue polypeptide: UPF0102 protein PputW619_0932 (123 aa).

The protein belongs to the UPF0102 family.

The polypeptide is UPF0102 protein PputW619_0932 (Pseudomonas putida (strain W619)).